Reading from the N-terminus, the 29-residue chain is Cycloviolacin-H2 (29 aa).

Residues 1–29 constitute a cross-link (cyclopeptide (Ser-Asn)); it reads SAIACGESCVYIPCFIPGCSCRNRVCYLN. Cystine bridges form between Cys-5-Cys-19, Cys-9-Cys-21, and Cys-14-Cys-26.

In terms of processing, this is a cyclic peptide.

Probably participates in a plant defense mechanism. This is Cycloviolacin-H2 from Viola hederacea (Australian violet).